A 386-amino-acid chain; its full sequence is Patatin-2-Kuras 3 (386 aa).

Positions 1 to 23 are cleaved as a signal peptide; that stretch reads MATTKSVLVLFFMILATTSSTCA. The PNPLA domain occupies 32 to 229; sequence LSIDGGGIKG…TVGDPALLSL (198 aa). Residues 36-41 carry the GXGXXG motif; the sequence is GGGIKG. A GXSXG motif is present at residues 75–79; sequence GTSTG. Serine 77 acts as the Nucleophile in catalysis. Asparagine 115 carries N-linked (GlcNAc...) asparagine glycosylation. Aspartate 215 functions as the Proton acceptor in the catalytic mechanism. A DGA/G motif is present at residues 215–217; the sequence is DGA. Residues 321–384 are a coiled coil; that stretch reads ENALTGTTTE…DRKKLRANKA (64 aa).

The protein belongs to the patatin family. Tuber.

The protein resides in the vacuole. Its function is as follows. Probable lipolytic acyl hydrolase (LAH), an activity which is thought to be involved in the response of tubers to pathogens. This is Patatin-2-Kuras 3 (pat2-k3) from Solanum tuberosum (Potato).